The primary structure comprises 168 residues: Large ribosomal subunit protein uL5 (168 aa).

It belongs to the universal ribosomal protein uL5 family. In terms of assembly, part of the 50S ribosomal subunit; contacts the 5S rRNA and probably tRNA. Forms a bridge to the 30S subunit in the 70S ribosome.

In terms of biological role, this is one of the proteins that bind and probably mediate the attachment of the 5S RNA into the large ribosomal subunit, where it forms part of the central protuberance. In the 70S ribosome it contacts protein S13 of the 30S subunit (bridge B1b), connecting the 2 subunits; this bridge is implicated in subunit movement. May contact the P site tRNA; the 5S rRNA and some of its associated proteins might help stabilize positioning of ribosome-bound tRNAs. The chain is Large ribosomal subunit protein uL5 from Methanosphaera stadtmanae (strain ATCC 43021 / DSM 3091 / JCM 11832 / MCB-3).